Consider the following 369-residue polypeptide: Protein FAM187B (369 aa).

The N-terminal stretch at 1–17 (MPPMLWLLLNFAAPALG) is a signal peptide. The Extracellular portion of the chain corresponds to 18–333 (FYFSISCPSG…PGRADSVLKG (316 aa)). N-linked (GlcNAc...) asparagine glycosylation is found at Asn45, Asn68, and Asn130. Residues 334-354 (LKLVLLVGTVLVLLGALLKFI) form a helical membrane-spanning segment. Residues 355–369 (RPSPGKRSKQVLMVK) lie on the Cytoplasmic side of the membrane.

This sequence belongs to the FAM187 family.

It localises to the membrane. The chain is Protein FAM187B (FAM187B) from Macaca fascicularis (Crab-eating macaque).